A 328-amino-acid polypeptide reads, in one-letter code: Formimidoylglutamase (328 aa).

The Mn(2+) site is built by histidine 133, aspartate 159, histidine 161, aspartate 163, aspartate 253, and aspartate 255.

Belongs to the arginase family. It depends on Mn(2+) as a cofactor.

It catalyses the reaction N-formimidoyl-L-glutamate + H2O = formamide + L-glutamate. The protein operates within amino-acid degradation; L-histidine degradation into L-glutamate; L-glutamate from N-formimidoyl-L-glutamate (hydrolase route): step 1/1. Its function is as follows. Catalyzes the conversion of N-formimidoyl-L-glutamate to L-glutamate and formamide. The protein is Formimidoylglutamase of Streptococcus pyogenes serotype M3 (strain ATCC BAA-595 / MGAS315).